The sequence spans 265 residues: Phosphate import ATP-binding protein PstB (265 aa).

In terms of domain architecture, ABC transporter spans 11 to 260 (VSADEVKIAA…PRDPRTESYI (250 aa)). 50-57 (GPSGCGKS) serves as a coordination point for ATP.

Belongs to the ABC transporter superfamily. Phosphate importer (TC 3.A.1.7) family. As to quaternary structure, the complex is composed of two ATP-binding proteins (PstB), two transmembrane proteins (PstC and PstA) and a solute-binding protein (PstS).

The protein resides in the cell inner membrane. The enzyme catalyses phosphate(out) + ATP + H2O = ADP + 2 phosphate(in) + H(+). Functionally, part of the ABC transporter complex PstSACB involved in phosphate import. Responsible for energy coupling to the transport system. The polypeptide is Phosphate import ATP-binding protein PstB (Cereibacter sphaeroides (strain ATCC 17023 / DSM 158 / JCM 6121 / CCUG 31486 / LMG 2827 / NBRC 12203 / NCIMB 8253 / ATH 2.4.1.) (Rhodobacter sphaeroides)).